A 211-amino-acid chain; its full sequence is Urease accessory protein UreG (211 aa).

12-19 (GPVGAGKT) lines the GTP pocket.

It belongs to the SIMIBI class G3E GTPase family. UreG subfamily. Homodimer. UreD, UreF and UreG form a complex that acts as a GTP-hydrolysis-dependent molecular chaperone, activating the urease apoprotein by helping to assemble the nickel containing metallocenter of UreC. The UreE protein probably delivers the nickel.

It is found in the cytoplasm. In terms of biological role, facilitates the functional incorporation of the urease nickel metallocenter. This process requires GTP hydrolysis, probably effectuated by UreG. This chain is Urease accessory protein UreG, found in Paracoccus denitrificans (strain Pd 1222).